Reading from the N-terminus, the 625-residue chain is Vitamin B12 transporter BtuB (625 aa).

The signal sequence occupies residues methionine 1–alanine 21. The TonB box motif lies at aspartate 31–asparagine 38. In terms of domain architecture, TBDR plug spans proline 43–glycine 157. Cyanocob(III)alamin-binding positions include serine 90, asparagine 97, and isoleucine 115–threonine 116. In terms of domain architecture, TBDR beta-barrel spans lysine 160 to phenylalanine 625. The next 3 membrane-spanning stretches (beta stranded) occupy residues threonine 163 to glycine 170, tyrosine 174 to glutamine 183, and threonine 189 to serine 200. Aspartate 204, glutamine 217, aspartate 219, and aspartate 221 together coordinate Ca(2+). Transmembrane regions (beta stranded) follow at residues phenylalanine 223 to glutamate 233 and glutamate 238 to aspartate 254. Ca(2+)-binding residues include tyrosine 255, aspartate 256, and aspartate 269. Transmembrane regions (beta stranded) follow at residues arginine 271 to lysine 285, glycine 287 to asparagine 304, serine 317 to glutamine 333, asparagine 336 to tryptophan 345, phenylalanine 363 to serine 379, valine 381 to aspartate 391, phenylalanine 395 to isoleucine 410, tyrosine 413 to asparagine 427, glutamate 445 to glutamate 454, leucine 460 to asparagine 469, tyrosine 484 to phenylalanine 501, proline 505 to alanine 520, arginine 528 to tryptophan 540, and aspartate 546 to aspartate 561. Serine 317 is a cyanocob(III)alamin binding site. Residue arginine 528 participates in cyanocob(III)alamin binding. Tyrosine 562 contributes to the cyanocob(III)alamin binding site. A run of 3 beta stranded transmembrane segments spans residues threonine 569–serine 583, isoleucine 596–valine 607, and proline 613–phenylalanine 625. A TonB C-terminal box motif is present at residues tyrosine 608–phenylalanine 625.

This sequence belongs to the TonB-dependent receptor family. BtuB (TC 1.B.14.3.1) subfamily.

The protein resides in the cell outer membrane. Functionally, involved in the active translocation of vitamin B12 (cyanocobalamin) across the outer membrane to the periplasmic space. It derives its energy for transport by interacting with the trans-periplasmic membrane protein TonB. The chain is Vitamin B12 transporter BtuB from Yersinia pestis bv. Antiqua (strain Antiqua).